The sequence spans 398 residues: MFHPIEEALDALKKGEVIIVVDDEDRENEGDFVALAEHATPEVINFMATHGRGLICTPLSEEIADRLDLHPMVEHNTDSHHTAFTVSIDHRETKTGISAQERSFTVQALLDSKSVPSDFQRPGHIFPLIAKKGGVLKRAGHTEAAVDLAEACGSPGAGVICEIMNEDGTMARVPELIEIAKKHQLKMITIKDLIQYRYNLTTLVEREVDITLPTDFGTFKVYGYTNEVDGKEHVAFVMGDVPFGEEPVLVRVHSECLTGDVFGSHRCDCGPQLHAALNQIAAEGRGVLLYLRQEGRGIGLINKLKAYKLQEQGYDTVEANEALGFLPDLRNYGIGAQILRDLGVRNMKLLTNNPRKIAGLEGYGLSISERVPLQMEAKEHNKKYLQTKMNKLGHLLHF.

The DHBP synthase stretch occupies residues 1–199 (MFHPIEEALD…IKDLIQYRYN (199 aa)). D-ribulose 5-phosphate is bound by residues 26 to 27 (RE), D31, 138 to 142 (RAGHT), and E162. Residue E27 coordinates Mg(2+). H141 is a binding site for Mg(2+). The tract at residues 200-398 (LTTLVEREVD…MNKLGHLLHF (199 aa)) is GTP cyclohydrolase II. Residue 251–255 (RVHSE) participates in GTP binding. Zn(2+) contacts are provided by C256, C267, and C269. GTP contacts are provided by residues Q272, 294-296 (EGR), and T316. D328 acts as the Proton acceptor; for GTP cyclohydrolase activity in catalysis. Residue R330 is the Nucleophile; for GTP cyclohydrolase activity of the active site. GTP-binding residues include T351 and K356.

The protein in the N-terminal section; belongs to the DHBP synthase family. In the C-terminal section; belongs to the GTP cyclohydrolase II family. Mg(2+) serves as cofactor. The cofactor is Mn(2+). It depends on Zn(2+) as a cofactor.

It carries out the reaction D-ribulose 5-phosphate = (2S)-2-hydroxy-3-oxobutyl phosphate + formate + H(+). The enzyme catalyses GTP + 4 H2O = 2,5-diamino-6-hydroxy-4-(5-phosphoribosylamino)-pyrimidine + formate + 2 phosphate + 3 H(+). Its pathway is cofactor biosynthesis; riboflavin biosynthesis; 2-hydroxy-3-oxobutyl phosphate from D-ribulose 5-phosphate: step 1/1. It functions in the pathway cofactor biosynthesis; riboflavin biosynthesis; 5-amino-6-(D-ribitylamino)uracil from GTP: step 1/4. Catalyzes the conversion of D-ribulose 5-phosphate to formate and 3,4-dihydroxy-2-butanone 4-phosphate. Functionally, catalyzes the conversion of GTP to 2,5-diamino-6-ribosylamino-4(3H)-pyrimidinone 5'-phosphate (DARP), formate and pyrophosphate. The protein is Riboflavin biosynthesis protein RibBA of Bacillus subtilis (strain 168).